The following is a 380-amino-acid chain: Septin homolog spn6 (380 aa).

The region spanning 27–297 (KECGLTIMLC…ERYRREQLTN (271 aa)) is the Septin-type G domain. Residues 37 to 44 (GASGTGKT) form a G1 motif region. GTP-binding positions include 37-44 (GASGTGKT), threonine 72, glycine 98, 177-185 (KADTFTTPE), and arginine 246. Residues 95 to 98 (DTPG) form a G3 motif region. A G4 motif region spans residues 176–179 (AKAD). The stretch at 304-380 (KLKKEHYERL…KSYKGRGHKK (77 aa)) forms a coiled coil.

It belongs to the TRAFAC class TrmE-Era-EngA-EngB-Septin-like GTPase superfamily. Septin GTPase family. Component of the sporulation-specific septin complex composed of at least spn2, spn5, spn6 and spn7.

Its subcellular location is the cytoplasm. It localises to the forespore membrane. Septin-like protein involved in the correct orientation of forespore membrane extension during sporulation. This Schizosaccharomyces pombe (strain 972 / ATCC 24843) (Fission yeast) protein is Septin homolog spn6 (spn6).